The sequence spans 1557 residues: Probable kinase PglW (1557 aa).

Residues 12–130 (SEFEHERRGL…VAEAVCFTDN (119 aa)) form the NERD domain. Protein kinase domains lie at 195-490 (ELER…LEVV) and 530-816 (WEVR…KVFL). Residues 536-544 (LGTGSTSRA) and Lys564 contribute to the ATP site. Disordered stretches follow at residues 615–634 (DERD…RRRE) and 821–861 (TVPS…QRDR). A compositionally biased stretch (low complexity) spans 830–849 (PAAPADGAAPAEGAAAGIAD).

This sequence belongs to the protein kinase superfamily. Ser/Thr protein kinase family.

In terms of biological role, BREX systems (bacteriophage exclusion) provide immunity against bacteriophage. Part of a type 2 BREX system. Previously called the phage growth limitation (Pgl) system, it confers protection against bacteriophage phiC31. The bacteria allows one cycle of phage infection, but subsequent cycles are impaired, protecting the original bacterial colony. The system undergoes high rates (10(-3) to 10(-4)) of phase reversion, i.e. loss and regain of phiC31 resistance. When the pglW-pglX-pglY-pglZ genes are transformed into a susceptible S.lividans (strain 1326) they confer resistance to infection by phage phiC31 and phiBT1; all 4 genes are necessary. The proteins has kinase domains and might bind DNA. Autophosphorylates when synthesized in vitro, cannot be expressed in E.coli. In Streptomyces coelicolor (strain ATCC BAA-471 / A3(2) / M145), this protein is Probable kinase PglW.